The primary structure comprises 505 residues: NADH-quinone oxidoreductase subunit N 1 (505 aa).

The next 14 membrane-spanning stretches (helical) occupy residues 18–38, 45–65, 84–104, 116–136, 138–158, 173–193, 223–243, 271–291, 292–312, 319–339, 345–365, 391–411, 429–449, and 473–493; these read LIPE…EMVL, LIAT…AWDF, YVGQ…SILA, IEFY…AQAN, FVLF…LVSY, LIMG…LYGV, FLAA…IGAF, AGFA…WWLV, QPVL…AALT, LIGL…IASH, VGAV…VFGV, FLAA…PLAG, GLLA…FGWI, and VGAA…LFGV.

The protein belongs to the complex I subunit 2 family. NDH-1 is composed of 14 different subunits. Subunits NuoA, H, J, K, L, M, N constitute the membrane sector of the complex.

It localises to the cell inner membrane. It catalyses the reaction a quinone + NADH + 5 H(+)(in) = a quinol + NAD(+) + 4 H(+)(out). In terms of biological role, NDH-1 shuttles electrons from NADH, via FMN and iron-sulfur (Fe-S) centers, to quinones in the respiratory chain. The immediate electron acceptor for the enzyme in this species is believed to be ubiquinone. Couples the redox reaction to proton translocation (for every two electrons transferred, four hydrogen ions are translocated across the cytoplasmic membrane), and thus conserves the redox energy in a proton gradient. In Opitutus terrae (strain DSM 11246 / JCM 15787 / PB90-1), this protein is NADH-quinone oxidoreductase subunit N 1.